The following is a 590-amino-acid chain: MSAILSADDLNDFISPGVACIKPVESLPQKQSNENPYEVTTEDKVQPENPPPAQISLTDCLACSGCVTSAEAVLISLQSHNEVLNTLDAQPEIRLVSGENGTVIEDSGRTRDEGRIFVASVSPQVRASLAATYGVSEKEANHIIHQFLSGPNGLRAGGKHGSGFSWVVDTNSLREAVLVLTADEVSESLTGSSAPKRPILSSACPGWICYAEKTHPFILPHLSRLKSPQALTGTFLKTVISKKLGVPASRIWHLSIMPCFDKKLEASREELTDAAWNRLSSGEPNTPVRDVDCVITSRELLSLASSRGISLPNLPRKSLPQSLRLPFPDPALNVFLFSEKSFSRQTSASGTSGGYLHNVLLSFQARNPGSEIVTQRGRNADVVDYTLMSPEGEPILKAARYYGFRNIQNLVRKLKPARVSRLPGAKVATGQTAGGRRQPISRNGASAGSSMDYAYVEVMACPGGCTNGGGQIRIGDAREFNAQHDASVTSETSKPLPHEQRSWLARVDEAYYSADSDMDDAVEDVRTVSVTDNEDRVHKTLQHWSAITDIPLEKLAYTTYREVESDVGKPSAPNDTSRVVELAGKIGGGW.

Cys20 is a binding site for [4Fe-4S] cluster. The tract at residues 25–50 (ESLPQKQSNENPYEVTTEDKVQPENP) is disordered. Residues Cys60, Cys63, Cys66, Cys204, and Cys259 each contribute to the [4Fe-4S] cluster site. The segment at 423–446 (PGAKVATGQTAGGRRQPISRNGAS) is disordered. Positions 461 and 465 each coordinate [4Fe-4S] cluster.

It belongs to the NARF family.

Its function is as follows. Component of the cytosolic Fe/S protein assembly machinery. Required for maturation of extramitochondrial Fe/S proteins. May play a role in the transfer of pre-assembled Fe/S clusters to target apoproteins. The chain is Cytosolic Fe-S cluster assembly factor nar1 (nar1) from Emericella nidulans (strain FGSC A4 / ATCC 38163 / CBS 112.46 / NRRL 194 / M139) (Aspergillus nidulans).